We begin with the raw amino-acid sequence, 398 residues long: Nuclear egress protein 2 (398 aa).

Residues 1–359 (MEMNKVLHQD…GPSRPQSGPW (359 aa)) are Perinuclear space-facing. 2 disordered regions span residues 202-246 (ALTR…PPPP) and 306-334 (LEEH…SLER). Pro residues predominate over residues 215–224 (ASPPPPPPRH). S216 bears the Phosphoserine mark. Residues 225–240 (PSCSPTMVAAGGAAAG) show a composition bias toward low complexity. Positions 311-323 (SRRRGVSTHHRHP) are enriched in basic residues. A helical transmembrane segment spans residues 360–382 (LPARFATLGPLVLALLLVLALLW). Residues 383–398 (RGHGQSSSPTRSAHRD) are Nuclear-facing.

This sequence belongs to the herpesviridae NEC2 protein family. Forms a heterohexameric complex with NEC1. Interacts with host UBA7 and RNF170; this interaction promotes UBA7 proteasomal degradation. Phosphorylated. Phosphorylation by viral kinase UL97 at Ser-216 plays an important role for correct viral nuclear egress complex (NEC) localization.

It is found in the host nucleus inner membrane. Its function is as follows. Plays an essential role in virion nuclear egress, the first step of virion release from infected cell. Within the host nucleus, NEC1 interacts with the newly formed capsid through the vertexes and directs it to the inner nuclear membrane by associating with NEC2. Induces the budding of the capsid at the inner nuclear membrane as well as its envelopment into the perinuclear space. There, the NEC1/NEC2 complex promotes the fusion of the enveloped capsid with the outer nuclear membrane and the subsequent release of the viral capsid into the cytoplasm where it will reach the secondary budding sites in the host Golgi or trans-Golgi network. Inhibits host ISGylation and subsequent innate antiviral response by targeting host UBA7 for proteasomal degradation. This chain is Nuclear egress protein 2, found in Homo sapiens (Human).